Consider the following 415-residue polypeptide: MVSTRGVLYYLLRPKELRPILQWKALHGLGHQRDEKNESPDVKACYQYLALTSRSFAAVCQQLDRELLMPICIFYLILRGLDTIEDDMTLSKEVKEPLLRNFYTTIYDQTWTFNDSGTDEKDRELLVHFDCVAREFHKIKDEYKIIITDITKQMGNGMADFVVSGDLTGIQKIKDYELYCHYVAGVVGDGLTRLFVEANVADPSLLKNPRLIESMGQFLQQTNIIRDVREDHDEVRHFWPKEVWSKYAQDFDHLVSPKPQDRKKALQCSSEMVLMALNRADDCLNYMAGVREQTVFNFVAIPQSMAIATLELCFQNPAIFDKNIKITKGATCQLMIDSTQDLQHVCQAFRRYARRIKKKNHPEDPHFHDINAACNKIDRFIDDRYPNLQDEQAKADTMYLAVLVLGVFGVVAAIL.

Residue N114 is glycosylated (N-linked (GlcNAc...) asparagine). The chain crosses the membrane as a helical span at residues 395-415; the sequence is ADTMYLAVLVLGVFGVVAAIL.

Belongs to the phytoene/squalene synthase family. It depends on Mg(2+) as a cofactor.

The protein localises to the membrane. The catalysed reaction is 2 (2E,6E)-farnesyl diphosphate + NADH + H(+) = squalene + 2 diphosphate + NAD(+). It catalyses the reaction 2 (2E,6E)-farnesyl diphosphate + NADPH + H(+) = squalene + 2 diphosphate + NADP(+). It participates in terpene metabolism; lanosterol biosynthesis; lanosterol from farnesyl diphosphate: step 1/3. Its function is as follows. Squalene synthase; part of the gene cluster that mediates the biosynthesis of squalestatin S1 (SQS1, also known as zaragozic acid A), a heavily oxidized fungal polyketide that offers potent cholesterol lowering activity by targeting squalene synthase (SS). Catalyzes the condensation of 2 two farnesyl pyrophosphate moieties to form squalene. The presence of a gene encoding a squalene synthase supports the identification of the cluster as being responsible for SQS1 production and suggests a likely mechanism for self-resistance. The sequence is that of Squalene synthase clz20 from Cochliobolus lunatus (Filamentous fungus).